Here is a 92-residue protein sequence, read N- to C-terminus: Small ribosomal subunit protein uS19c (92 aa).

The protein belongs to the universal ribosomal protein uS19 family.

Its subcellular location is the plastid. It is found in the chloroplast. Its function is as follows. Protein S19 forms a complex with S13 that binds strongly to the 16S ribosomal RNA. This Rhodomonas salina (Cryptomonas salina) protein is Small ribosomal subunit protein uS19c.